Consider the following 216-residue polypeptide: MSRRKQPDSPLFPFQPPVPDFAFERAAQRDGLWPVAGADEAGRGPLAGPVVAAAVILNPDAIPTGLNDSKLLTAEQRETLFEEILATATVSIASSSSARIDTTDILKASLDAMRRAVHGLEVAARIVLVDGRDVPPGLSCHAKAIVKGDSRSVSIAAASIVAKVTRDRMMARADATFPLYGFAHHAGYATVKHRTAIESHGPCSLHRMSFRPFRQL.

An RNase H type-2 domain is found at 33-216 (WPVAGADEAG…RMSFRPFRQL (184 aa)). Residues aspartate 39, glutamate 40, and aspartate 130 each coordinate a divalent metal cation.

It belongs to the RNase HII family. It depends on Mn(2+) as a cofactor. Mg(2+) serves as cofactor.

The protein localises to the cytoplasm. It catalyses the reaction Endonucleolytic cleavage to 5'-phosphomonoester.. Endonuclease that specifically degrades the RNA of RNA-DNA hybrids. This is Ribonuclease HII from Sinorhizobium medicae (strain WSM419) (Ensifer medicae).